The primary structure comprises 222 residues: Hexitol phosphatase B (222 aa).

The active-site Nucleophile is aspartate 13. 2 residues coordinate a divalent metal cation: aspartate 13 and aspartate 15. Residues 13 to 15 (DMD), 115 to 116 (SA), and lysine 148 each bind substrate. Catalysis depends on aspartate 15, which acts as the Proton donor. Position 173 (aspartate 173) interacts with a divalent metal cation.

Belongs to the HAD-like hydrolase superfamily. CbbY/CbbZ/Gph/YieH family. Requires Mg(2+) as cofactor. Mn(2+) is required as a cofactor. Co(2+) serves as cofactor. It depends on Zn(2+) as a cofactor.

The catalysed reaction is sugar phosphate + H2O = sugar + phosphate.. The enzyme catalyses 2-deoxy-D-glucose 6-phosphate + H2O = 2-deoxy-D-glucose + phosphate. It carries out the reaction D-mannitol 1-phosphate + H2O = D-mannitol + phosphate. It catalyses the reaction D-sorbitol 6-phosphate + H2O = D-sorbitol + phosphate. Functionally, sugar-phosphate phosphohydrolase that catalyzes the dephosphorylation of D-mannitol 1-phosphate and D-sorbitol 6-phosphate. Also catalyzes the dephosphorylation of 2-deoxyglucose 6-phosphate (2dGlu6P); this is a biologically important activity in vivo since it contributes to the elimination of this toxic compound and plays an important role in the resistance of E.coli to 2-deoxyglucose. This chain is Hexitol phosphatase B, found in Escherichia coli O157:H7.